The chain runs to 122 residues: Large ribosomal subunit protein bL17 (122 aa).

Belongs to the bacterial ribosomal protein bL17 family. As to quaternary structure, part of the 50S ribosomal subunit. Contacts protein L32.

This Neisseria meningitidis serogroup C / serotype 2a (strain ATCC 700532 / DSM 15464 / FAM18) protein is Large ribosomal subunit protein bL17.